Consider the following 152-residue polypeptide: D-aminoacyl-tRNA deacylase (152 aa).

Residues 142 to 143 (GP) carry the Gly-cisPro motif, important for rejection of L-amino acids motif.

Belongs to the DTD family. Homodimer.

It is found in the cytoplasm. The catalysed reaction is glycyl-tRNA(Ala) + H2O = tRNA(Ala) + glycine + H(+). It catalyses the reaction a D-aminoacyl-tRNA + H2O = a tRNA + a D-alpha-amino acid + H(+). Its function is as follows. An aminoacyl-tRNA editing enzyme that deacylates mischarged D-aminoacyl-tRNAs. Also deacylates mischarged glycyl-tRNA(Ala), protecting cells against glycine mischarging by AlaRS. Acts via tRNA-based rather than protein-based catalysis; rejects L-amino acids rather than detecting D-amino acids in the active site. By recycling D-aminoacyl-tRNA to D-amino acids and free tRNA molecules, this enzyme counteracts the toxicity associated with the formation of D-aminoacyl-tRNA entities in vivo and helps enforce protein L-homochirality. The sequence is that of D-aminoacyl-tRNA deacylase from Paraburkholderia phymatum (strain DSM 17167 / CIP 108236 / LMG 21445 / STM815) (Burkholderia phymatum).